We begin with the raw amino-acid sequence, 385 residues long: Methionine aminopeptidase 1 (385 aa).

Residues Ser-6 to Lys-59 form a C6H2-type zinc finger. 8 residues coordinate Zn(2+): Cys-9, Cys-14, Cys-22, Cys-25, Cys-36, Cys-40, His-48, and His-52. His-203 is an a protein binding site. Asp-220, Asp-231, and His-294 together coordinate Zn(2+). His-301 contributes to the a protein binding site. Residues Glu-327 and Glu-358 each coordinate Zn(2+).

It belongs to the peptidase M24A family. Methionine aminopeptidase type 1 subfamily. Associates with the 60S ribosomal subunit of the 80S translational complex. Zn(2+) serves as cofactor. Requires Co(2+) as cofactor. Mn(2+) is required as a cofactor. It depends on Fe(2+) as a cofactor.

It localises to the cytoplasm. The catalysed reaction is Release of N-terminal amino acids, preferentially methionine, from peptides and arylamides.. Cotranslationally removes the N-terminal methionine from nascent proteins. The N-terminal methionine is often cleaved when the second residue in the primary sequence is small and uncharged (Met-Ala-, Cys, Gly, Pro, Ser, Thr, or Val). In Xenopus laevis (African clawed frog), this protein is Methionine aminopeptidase 1 (metap1).